A 317-amino-acid chain; its full sequence is tRNA dimethylallyltransferase (317 aa).

14–21 (GPTASGKT) is an ATP binding site. 16–21 (TASGKT) is a substrate binding site. 3 interaction with substrate tRNA regions span residues 39–42 (DSAL), 163–167 (QRIQR), and 248–253 (RCVGYR).

Belongs to the IPP transferase family. In terms of assembly, monomer. The cofactor is Mg(2+).

The enzyme catalyses adenosine(37) in tRNA + dimethylallyl diphosphate = N(6)-dimethylallyladenosine(37) in tRNA + diphosphate. In terms of biological role, catalyzes the transfer of a dimethylallyl group onto the adenine at position 37 in tRNAs that read codons beginning with uridine, leading to the formation of N6-(dimethylallyl)adenosine (i(6)A). This chain is tRNA dimethylallyltransferase, found in Paraburkholderia phymatum (strain DSM 17167 / CIP 108236 / LMG 21445 / STM815) (Burkholderia phymatum).